Here is a 101-residue protein sequence, read N- to C-terminus: Protein RALF-like 14 (101 aa).

Positions Met1 to Ser21 are cleaved as a signal peptide. The propeptide at Arg22–Leu56 is removed in mature form. Cysteines 90 and 96 form a disulfide.

It belongs to the plant rapid alkalinization factor (RALF) family. Proteolytically cleaved, probably by S1P, a subtilisin-like serine protease (subtilase).

The protein localises to the secreted. Functionally, cell signaling peptide that may regulate plant stress, growth, and development. Mediates a rapid alkalinization of extracellular space by mediating a transient increase in the cytoplasmic Ca(2+) concentration leading to a calcium-dependent signaling events through a cell surface receptor and a concomitant activation of some intracellular mitogen-activated protein kinases. In Arabidopsis thaliana (Mouse-ear cress), this protein is Protein RALF-like 14 (RALFL14).